We begin with the raw amino-acid sequence, 753 residues long: Bile salt-activated lipase (753 aa).

The N-terminal stretch at 1–20 (MGRLQLVVLGLTCCWAVASA) is a signal peptide. The heparin-binding stretch occupies residues 21–121 (AKLGAVYTEG…KQVSRDLPVM (101 aa)). Cysteines 84 and 100 form a disulfide. The N-linked (GlcNAc...) (complex) asparagine glycan is linked to asparagine 207. Residue serine 214 is the Acyl-ester intermediate of the active site. Cysteines 266 and 277 form a disulfide. Residues aspartate 340 and histidine 455 each act as charge relay system in the active site. Positions 555–753 (QEATPVPPTG…EAQMPAVIRF (199 aa)) are disordered. O-linked (GalNAc...) threonine glycosylation is found at threonine 558, threonine 569, and threonine 579. 17 consecutive repeat copies span residues 559-569 (PVPPTGDSEAT), 570-580 (PVPPTGDSETA), 581-591 (PVPPTGDSGAP), 592-602 (PVPPTGDSGAP), 603-613 (PVPPTGDSGAP), 614-624 (PVPPTGDSGAP), 625-635 (PVPPTGDSGAP), 636-646 (PVPPTGDSGAP), 647-657 (PVPPTGDSGAP), 658-668 (PVPPTGDSGAP), 669-679 (PVPPTGDAGPP), 680-690 (PVPPTGDSGAP), 691-701 (PVPPTGDSGAP), 702-712 (PVTPTGDSETA), 713-723 (PVPPTGDSGAP), 724-734 (PVPPTGDSEAA), and 735-745 (PVPPTDDSKEA). A 17 X 11 AA tandem repeats, glycodomain, O-linked (mucin type) region spans residues 559–745 (PVPPTGDSEA…VPPTDDSKEA (187 aa)). O-linked (GalNAc...) threonine glycosylation is found at threonine 607, threonine 618, threonine 629, threonine 640, threonine 651, threonine 662, and threonine 673. Over residues 668-683 (PPVPPTGDAGPPPVPP) the composition is skewed to pro residues.

It belongs to the type-B carboxylesterase/lipase family. In terms of assembly, interacts with CLC. In terms of processing, N- and O-glycosylated. In terms of tissue distribution, mammary gland and pancreas. Detected in pancreatic and duodenal juice (at protein level). Expressed by eosinophils.

Its subcellular location is the secreted. The enzyme catalyses a triacylglycerol + H2O = a diacylglycerol + a fatty acid + H(+). It carries out the reaction 1,2,3-tri-(9Z-octadecenoyl)-glycerol + H2O = di-(9Z)-octadecenoylglycerol + (9Z)-octadecenoate + H(+). It catalyses the reaction 1,2,3-trioctanoylglycerol + H2O = dioctanoylglycerol + octanoate + H(+). The catalysed reaction is a sterol ester + H2O = a sterol + a fatty acid + H(+). The enzyme catalyses cholesteryl (9Z-octadecenoate) + H2O = cholesterol + (9Z)-octadecenoate + H(+). It carries out the reaction an acetyl ester + H2O = an aliphatic alcohol + acetate + H(+). It catalyses the reaction a butanoate ester + H2O = an aliphatic alcohol + butanoate + H(+). The catalysed reaction is 9-hexadecanoyloxy-octadecanoate + H2O = 9-hydroxy-octadecanoate + hexadecanoate + H(+). The enzyme catalyses 9-(9Z-octadecenoyloxy)-octadecanoate + H2O = 9-hydroxy-octadecanoate + (9Z)-octadecenoate + H(+). It carries out the reaction 1-hexadecanoyl-sn-glycero-3-phosphocholine + H2O = sn-glycerol 3-phosphocholine + hexadecanoate + H(+). It catalyses the reaction 12-hexadecanoyloxy-octadecanoate + H2O = 12-hydroxyoctadecanoate + hexadecanoate + H(+). The catalysed reaction is 12-(9Z-octadecenoyloxy)-octadecanoate + H2O = 12-hydroxyoctadecanoate + (9Z)-octadecenoate + H(+). The enzyme catalyses 13-(9Z-octadecenoyloxy)-octadecanoate + H2O = 13-hydroxy-octadecanoate + (9Z)-octadecenoate + H(+). It carries out the reaction 9-(9Z-hexadecenoyloxy)-octadecanoate + H2O = (9Z)-hexadecenoate + 9-hydroxy-octadecanoate + H(+). It catalyses the reaction 12-(9Z-hexadecenoyloxy)-octadecanoate + H2O = 12-hydroxyoctadecanoate + (9Z)-hexadecenoate + H(+). The catalysed reaction is 13-(9Z-hexadecenoyloxy)-octadecanoate + H2O = 13-hydroxy-octadecanoate + (9Z)-hexadecenoate + H(+). The enzyme catalyses 12-octadecanoyloxy-octadecanoate + H2O = 12-hydroxyoctadecanoate + octadecanoate + H(+). It carries out the reaction 13-octadecanoyloxy-octadecanoate + H2O = 13-hydroxy-octadecanoate + octadecanoate + H(+). It catalyses the reaction 5-(9Z-hexadecenoyloxy)-octadecanoate + H2O = 5-hydroxy-octadecanoate + (9Z)-hexadecenoate + H(+). The catalysed reaction is 9-octadecanoyloxy-octadecanoate + H2O = 9-hydroxy-octadecanoate + octadecanoate + H(+). Its activity is regulated as follows. Activated by bile salts such as sodium taurocholate. Its function is as follows. Catalyzes the hydrolysis of a wide range of substrates including cholesteryl esters, phospholipids, lysophospholipids, di- and tri-acylglycerols, and fatty acid esters of hydroxy fatty acids (FAHFAs). Preferentially hydrolyzes FAHFAs with the ester bond further away from the carboxylate. Unsaturated FAHFAs are hydrolyzed more quickly than saturated FAHFAs. Has an essential role in the complete digestion of dietary lipids and their intestinal absorption, along with the absorption of fat-soluble vitamins. The chain is Bile salt-activated lipase (CEL) from Homo sapiens (Human).